The primary structure comprises 251 residues: DNA repair protein RecO (251 aa).

The protein belongs to the RecO family.

Its function is as follows. Involved in DNA repair and RecF pathway recombination. In Acetivibrio thermocellus (strain ATCC 27405 / DSM 1237 / JCM 9322 / NBRC 103400 / NCIMB 10682 / NRRL B-4536 / VPI 7372) (Clostridium thermocellum), this protein is DNA repair protein RecO.